A 769-amino-acid polypeptide reads, in one-letter code: 5-methyltetrahydropteroyltriglutamate--homocysteine methyltransferase (769 aa).

5-methyltetrahydropteroyltri-L-glutamate-binding positions include R16–K19 and K118. Residues I440–S442 and E493 contribute to the L-homocysteine site. Residues I440–S442 and E493 contribute to the L-methionine site. 5-methyltetrahydropteroyltri-L-glutamate-binding positions include R524–C525 and W570. D608 is an L-homocysteine binding site. Position 608 (D608) interacts with L-methionine. E614 provides a ligand contact to 5-methyltetrahydropteroyltri-L-glutamate. Residues H650, C652, and E674 each contribute to the Zn(2+) site. H706 (proton donor) is an active-site residue. A Zn(2+)-binding site is contributed by C738.

It belongs to the vitamin-B12 independent methionine synthase family. It depends on Zn(2+) as a cofactor.

The enzyme catalyses 5-methyltetrahydropteroyltri-L-glutamate + L-homocysteine = tetrahydropteroyltri-L-glutamate + L-methionine. Its pathway is amino-acid biosynthesis; L-methionine biosynthesis via de novo pathway; L-methionine from L-homocysteine (MetE route): step 1/1. Its function is as follows. Catalyzes the transfer of a methyl group from 5-methyltetrahydrofolate to homocysteine resulting in methionine formation. This is 5-methyltetrahydropteroyltriglutamate--homocysteine methyltransferase from Acidiphilium cryptum (strain JF-5).